We begin with the raw amino-acid sequence, 563 residues long: Delta-1-pyrroline-5-carboxylate dehydrogenase, mitochondrial (563 aa).

A mitochondrion-targeting transit peptide spans 1–23 (MLPPALLRRSLLSYAWRGSGLRW). Position 30 is an N6-succinyllysine (lysine 30). Serine 43 bears the Phosphoserine mark. The residue at position 51 (lysine 51) is an N6-acetyllysine. Residues lysine 92, lysine 98, lysine 113, lysine 129, and lysine 174 each carry the N6-acetyllysine; alternate modification. N6-succinyllysine; alternate occurs at positions 92, 98, 113, 129, and 174. Residues serine 207, lysine 232, and 285 to 289 (GSVPT) contribute to the NAD(+) site. Catalysis depends on glutamate 313, which acts as the Proton acceptor. At lysine 317 the chain carries N6-acetyllysine. Lysine 346 carries the post-translational modification N6-succinyllysine. Cysteine 347 serves as the catalytic Nucleophile. N6-acetyllysine is present on residues lysine 364 and lysine 375. Lysine 394 carries the N6-succinyllysine modification. Glutamate 446 contributes to the NAD(+) binding site. Residue lysine 461 is modified to N6-acetyllysine. Lysine 508 is subject to N6-acetyllysine; alternate. Lysine 508 carries the post-translational modification N6-succinyllysine; alternate. Serine 512 contacts substrate.

Belongs to the aldehyde dehydrogenase family. Homodimer.

It is found in the mitochondrion matrix. The catalysed reaction is L-glutamate 5-semialdehyde + NAD(+) + H2O = L-glutamate + NADH + 2 H(+). It functions in the pathway amino-acid degradation; L-proline degradation into L-glutamate; L-glutamate from L-proline: step 2/2. Its function is as follows. Irreversible conversion of delta-1-pyrroline-5-carboxylate (P5C), derived either from proline or ornithine, to glutamate. This is a necessary step in the pathway interconnecting the urea and tricarboxylic acid cycles. The preferred substrate is glutamic gamma-semialdehyde, other substrates include succinic, glutaric and adipic semialdehydes. The chain is Delta-1-pyrroline-5-carboxylate dehydrogenase, mitochondrial (Aldh4a1) from Rattus norvegicus (Rat).